The sequence spans 261 residues: Src-like-adapter 2 (261 aa).

The span at 1–10 (MGSLPSRRKS) shows a compositional bias: basic residues. Residues 1 to 31 (MGSLPSRRKSLPSPSLSSSVQGQGPVTMEAE) form a disordered region. Residue Gly-2 is the site of N-myristoyl glycine attachment. The region spanning 32–92 (RSKATAVALG…PSVHVAKVSH (61 aa)) is the SH3 domain. An SH2 domain is found at 94-191 (WLYEGLSREK…DICCLLKEPC (98 aa)). Residues 195–261 (RAGPLPGKDI…NDEAVSLDDA (67 aa)) are SLA C-terminal.

Interacts (via SH2 domain) with ZAP70 (phosphorylated) and CD3Z (phosphorylated). Interacts (via SH2 domain) with CSF1R (phosphorylated). Interacts (via its C-terminal domain) with CBL (phosphorylated). Phosphorylated by CSF1R. Predominantly expressed in immune system, with highest levels in peripheral blood leukocytes. Expressed in spleen, thymus and lymph nodes. Expressed in T-cells as well as in monocytes, and at low level in B-cells. Also detected in placenta, prostate, skin, retina and colon.

It localises to the cytoplasm. Its subcellular location is the cell membrane. The protein resides in the cytoplasmic vesicle. In terms of biological role, adapter protein, which negatively regulates T-cell receptor (TCR) signaling. Inhibits T-cell antigen-receptor induced activation of nuclear factor of activated T-cells. May act by linking signaling proteins such as ZAP70 with CBL, leading to a CBL dependent degradation of signaling proteins. The protein is Src-like-adapter 2 (SLA2) of Homo sapiens (Human).